A 148-amino-acid chain; its full sequence is Transcription antitermination protein NusB (148 aa).

Belongs to the NusB family.

Involved in transcription antitermination. Required for transcription of ribosomal RNA (rRNA) genes. Binds specifically to the boxA antiterminator sequence of the ribosomal RNA (rrn) operons. The chain is Transcription antitermination protein NusB from Nitrosococcus oceani (strain ATCC 19707 / BCRC 17464 / JCM 30415 / NCIMB 11848 / C-107).